The chain runs to 232 residues: Ribonuclease 3 (232 aa).

The RNase III domain maps to 5 to 134 (KKALLEQFDL…FLGALLLDKG (130 aa)). Glutamate 47 provides a ligand contact to Mg(2+). The active site involves aspartate 51. Positions 120 and 123 each coordinate Mg(2+). Glutamate 123 is a catalytic residue. One can recognise a DRBM domain in the interval 160–229 (DYKTKLQELL…AKNAFEKESS (70 aa)). Positions 203-232 (KSGQGQGRSKKLAEQEAAKNAFEKESSSCF) are disordered. Residues 213–232 (KLAEQEAAKNAFEKESSSCF) are compositionally biased toward basic and acidic residues.

It belongs to the ribonuclease III family. In terms of assembly, homodimer. It depends on Mg(2+) as a cofactor.

The protein resides in the cytoplasm. The enzyme catalyses Endonucleolytic cleavage to 5'-phosphomonoester.. In terms of biological role, digests double-stranded RNA. Involved in the processing of primary rRNA transcript to yield the immediate precursors to the large and small rRNAs (23S and 16S). Processes some mRNAs, and tRNAs when they are encoded in the rRNA operon. Processes pre-crRNA and tracrRNA of type II CRISPR loci if present in the organism. In Streptococcus sanguinis (strain SK36), this protein is Ribonuclease 3.